Reading from the N-terminus, the 311-residue chain is Homeobox protein knotted-1-like 10 (311 aa).

Disordered stretches follow at residues 1 to 45 (MEDL…PATT) and 153 to 184 (LCGGAPPPTDNSDEMVGSSEDEPCSGDADAAD). The segment covering 12–22 (SRGGGGGGGGA) has biased composition (gly residues). Residues 197-217 (ELKEMLLKKYSGCLSRLRSEF) enclose the ELK domain. The homeobox; TALE-type DNA-binding region spans 218–281 (LKKRKKGKLP…NQRKRHWKPS (64 aa)).

It belongs to the TALE/KNOX homeobox family.

It is found in the nucleus. In terms of biological role, probable transcription factor that may be involved in shoot formation during embryogenesis. This Oryza sativa subsp. indica (Rice) protein is Homeobox protein knotted-1-like 10 (OSH71).